A 63-amino-acid polypeptide reads, in one-letter code: Protein Wfdc21 (63 aa).

The N-terminal stretch at 1-24 (MKLGAFLLLVSLITLSLEVQELQA) is a signal peptide. The WAP; atypical domain occupies 25–63 (AVRPLQLLGTCAELCRGDWDCGPEEQCVSIGCSHICTTN). 3 disulfide bridges follow: C35/C56, C39/C51, and C45/C60.

As to expression, predominantly expressed in white adipose tissue and liver.

The protein resides in the secreted. May promote activation of the metalloproteinase MMP2. The polypeptide is Protein Wfdc21 (Mus musculus (Mouse)).